We begin with the raw amino-acid sequence, 469 residues long: Chromosomal replication initiator protein DnaA (469 aa).

The segment at 1–71 (MKEFWQTCVS…EALAAEWYQR (71 aa)) is domain I, interacts with DnaA modulators. Positions 71–131 (RPVQVTFELP…DAANIVYERS (61 aa)) are domain II. The segment at 132-348 (RLNTDLTFEN…GALRKVLAYA (217 aa)) is domain III, AAA+ region. 4 residues coordinate ATP: Gly176, Gly178, Lys179, and Thr180. Residues 349–469 (RFHGRDVLTV…LHVLEQTLKG (121 aa)) form a domain IV, binds dsDNA region.

This sequence belongs to the DnaA family. As to quaternary structure, oligomerizes as a right-handed, spiral filament on DNA at oriC.

The protein localises to the cytoplasm. Functionally, plays an essential role in the initiation and regulation of chromosomal replication. ATP-DnaA binds to the origin of replication (oriC) to initiate formation of the DNA replication initiation complex once per cell cycle. Binds the DnaA box (a 9 base pair repeat at the origin) and separates the double-stranded (ds)DNA. Forms a right-handed helical filament on oriC DNA; dsDNA binds to the exterior of the filament while single-stranded (ss)DNA is stabiized in the filament's interior. The ATP-DnaA-oriC complex binds and stabilizes one strand of the AT-rich DNA unwinding element (DUE), permitting loading of DNA polymerase. After initiation quickly degrades to an ADP-DnaA complex that is not apt for DNA replication. Binds acidic phospholipids. The polypeptide is Chromosomal replication initiator protein DnaA (Bordetella parapertussis (strain 12822 / ATCC BAA-587 / NCTC 13253)).